We begin with the raw amino-acid sequence, 108 residues long: Bublin coiled-coil protein (108 aa).

Disordered regions lie at residues 1–23 and 67–108; these read MSGP…DDDF and RLEF…DEGS. A coiled-coil region spans residues 25-73; it reads SEEYEAINSMLDQINSYLDDLEERNDSLNGKLHELMESNRQARLEFRAQ. Basic and acidic residues predominate over residues 99–108; that stretch reads ENDKKIDEGS.

It belongs to the UPF0184 (EST00098) family.

Its subcellular location is the cell junction. The protein localises to the cytoplasm. It localises to the cytoskeleton. Essential for intermediate filament organization in intestinal cells, interacts with intermediate filament and regulates intestinal lumen morphology. This Takifugu rubripes (Japanese pufferfish) protein is Bublin coiled-coil protein (bbln).